The primary structure comprises 258 residues: MNSILERIAKHKLEEVAVAKKNKPLHVLSKQQPGEIRDFITALKSNTSPAVIAEIKKASPSKGLIRKDFNVAEIAKIYTQNGARCLSVLTDIEFFQGHPDYLALAKSKTTLPVLRKDFIIDSYQIYESLVLGADCILLIVALLDDVQLMDFCQLAQELKMSVLVESHTQDELERALRLPTPLIGINNRSLHNFKTDIQLSIQLKQFVPKDKIIITESGINTREDIKLMQSHDINAFLIGESLMRADNIGKALQKLMTD.

It belongs to the TrpC family.

It catalyses the reaction 1-(2-carboxyphenylamino)-1-deoxy-D-ribulose 5-phosphate + H(+) = (1S,2R)-1-C-(indol-3-yl)glycerol 3-phosphate + CO2 + H2O. It functions in the pathway amino-acid biosynthesis; L-tryptophan biosynthesis; L-tryptophan from chorismate: step 4/5. In Legionella pneumophila (strain Lens), this protein is Indole-3-glycerol phosphate synthase.